The chain runs to 1016 residues: Rho family-interacting cell polarization regulator 2 (1016 aa).

Serine 21 and serine 37 each carry phosphoserine. The disordered stretch occupies residues 44 to 73 (AVKKPQAKLKKMHNLGHKNSSPPKEPQPKR). Over residues 48 to 59 (PQAKLKKMHNLG) the composition is skewed to basic residues. The tract at residues 55–113 (MHNLGHKNSSPPKEPQPKRVEEVYRALKNGLDEYLEVHQTELDKLTTQLKDMRRNSRLG) is involved in cell filopodia formation. Residues 85–112 (LDEYLEVHQTELDKLTTQLKDMRRNSRL) are a coiled coil. Position 341 is a phosphoserine (serine 341). Over residues 414 to 428 (TSTELPPGSQSSQNE) the composition is skewed to polar residues. The tract at residues 414–469 (TSTELPPGSQSSQNEGLKDSSSASCSSSSREGSEPRPHPEGETQGLGKPEGCPVAT) is disordered. The span at 433-442 (SSSASCSSSS) shows a compositional bias: low complexity. Residues 444 to 454 (EGSEPRPHPEG) are compositionally biased toward basic and acidic residues. Phosphoserine occurs at positions 520 and 532. A disordered region spans residues 636–656 (DSVFSDTETEKNSYRSVHPEA). Over residues 643–656 (ETEKNSYRSVHPEA) the composition is skewed to basic and acidic residues.

It belongs to the RIPOR family. Homooligomer; homooligomerization is regulated by RHOC and leads to the formation of concatemers through the association of N- and C-termini. Interacts (phosphorylated form) with 14-3-3 proteins; these interactions occur during myogenic cell differentiation and also induces T cell proliferation arrest. Interacts (phosphorylated form) with HDAC6; this interaction occurs during early myogenic differentiation, prevents HDAC6 to deacetylate tubulin and also induces T cell proliferation arrest. Interacts with DYSF; this interaction occurs during early myogenic differentiation. Interacts with MYOF. Interacts (via active GTP- or inactive GDP-bound forms) with RHOA; this interaction is direct, blocks the loading of GTP to RHOA and decreases upon chemokine CCL19 stimulation in primary T lymphocytes. Interacts with RHOC. Interacts (via phosphorylated form) with YWHAB; this interaction occurs in a chemokine-dependent manner and does not compete for binding of RIPOR2 with RHOA nor blocks inhibition of RIPOR2-mediated RHOA activity. Interacts with YWHAE. Interacts with YWHAQ. Phosphorylated. Chemokine-induced phosphorylation in neutrophils occurs in a PKC- and AKT-dependent manner, resulting in RIPOR2 interaction with YWHAB and stabilization. Phosphorylated by PKCA, AKT1 and MAPKAPK1A; in vitro.

The protein localises to the cytoplasm. It localises to the cytoskeleton. It is found in the cell projection. The protein resides in the filopodium. Its subcellular location is the apical cell membrane. The protein localises to the stereocilium. It localises to the stereocilium membrane. In terms of biological role, acts as an inhibitor of the small GTPase RHOA and plays several roles in the regulation of myoblast and hair cell differentiation, lymphocyte T proliferation and neutrophil polarization. Plays a role in fetal mononuclear myoblast differentiation by promoting filopodia and myotube formation. Maintains naive T lymphocytes in a quiescent state and prevents chemokine-induced T lymphocyte responses, such as cell adhesion, polarization and migration. Involved also in the regulation of neutrophil polarization, chemotaxis and adhesion. Required for normal development of inner and outer hair cell stereocilia within the cochlea of the inner ear. Plays a role for maintaining the structural organization of the basal domain of stereocilia. Involved in mechanosensory hair cell function. Required for normal hearing. The sequence is that of Rho family-interacting cell polarization regulator 2 from Bos taurus (Bovine).